Consider the following 164-residue polypeptide: Mediator of RNA polymerase II transcription subunit 21 (164 aa).

A disordered region spans residues 49–81 (APLPANQTQQGSTLGSNRQTVSPSTQAEAESNF). The span at 53–81 (ANQTQQGSTLGSNRQTVSPSTQAEAESNF) shows a compositional bias: polar residues. Residues 114 to 146 (ESQLKIIDDLSKELQSVEQEQVKKIQEKDKLLK) adopt a coiled-coil conformation.

It belongs to the Mediator complex subunit 21 family. Component of the Mediator complex.

It is found in the nucleus. In terms of biological role, component of the Mediator complex, a coactivator involved in the regulated transcription of nearly all RNA polymerase II-dependent genes. Mediator functions as a bridge to convey information from gene-specific regulatory proteins to the basal RNA polymerase II transcription machinery. Mediator is recruited to promoters by direct interactions with regulatory proteins and serves as a scaffold for the assembly of a functional preinitiation complex with RNA polymerase II and the general transcription factors. In Scheffersomyces stipitis (strain ATCC 58785 / CBS 6054 / NBRC 10063 / NRRL Y-11545) (Yeast), this protein is Mediator of RNA polymerase II transcription subunit 21 (SRB7).